A 658-amino-acid chain; its full sequence is MLRQVTRACPFCEVRSLLGQAPRSLQPQTRLYTQVQREAQRERGSRDSNTPSRPRDRRTPETDAFPPSSDRGSRGRSPRGRDDRRPSRMILSDAVSRPPQSDQRPARRPQEPFGHLNRTRAPPSLERERERRESHFERPKRNDDGKRRTRAEPYHALKMQRSLHEVPYGNRTTIKRKMELYDSFDKMPLLDTVQAAIKDALPALEYRSPTPAQSVAVPALLGLEAKKRTKATSTKKGGPEAFLLAAETGSGKTLAYLLPTLDAIKKAEQQEKEDAEAQAQKDADEAAAKAQDKRTDIFAAEEPEVNKAVDPARPRAIILVPSAELVAQVGAVAKSLSHTVKFRAAPISAKMSATVIRNQLFNEKGVDVVISTPPLLASIAESNPNILARVTHLICDEADSLFDRSFKPSTTEILERATPSLKQLILCSATIPKYLDKYLADRFPDMNRLVTPNLHAIPRRVQLGVVDVNKDPYHGNKNLACADTIWQIGRSTGEYDPAEGKEAVPTKRILVFVNEREDTEKVAQYLMSKGIDALAFHRDTDPSRQAKTLASFTGSDTSTAIKSSPDAPPKPELASKRTLANTKVIVTTDLGSRGIDTVSVRHVILYDVPHTTIDFIHRLGRTGRMGRRGRGIVLLGPGDRADVVKEVREAMYRGEALI.

The N-terminal 32 residues, Met-1–Tyr-32, are a transit peptide targeting the mitochondrion. The span at Leu-25 to Arg-37 shows a compositional bias: polar residues. The interval Leu-25–Arg-150 is disordered. A compositionally biased stretch (basic and acidic residues) spans Leu-125 to Arg-150. The Q motif signature appears at Asp-182–Ser-214. The Helicase ATP-binding domain maps to Ser-233 to Leu-449. Position 246–253 (Ala-246–Thr-253) interacts with ATP. The tract at residues Glu-268 to Asp-292 is disordered. Over residues Ala-279–Asp-292 the composition is skewed to basic and acidic residues. Residues Asp-396–Asp-399 carry the DEAD box motif. Positions Arg-490 to Ile-658 constitute a Helicase C-terminal domain. Over residues Phe-552–Lys-562 the composition is skewed to polar residues. The disordered stretch occupies residues Phe-552 to Leu-573.

This sequence belongs to the DEAD box helicase family. MRH4 subfamily.

Its subcellular location is the mitochondrion. It carries out the reaction ATP + H2O = ADP + phosphate + H(+). Its function is as follows. ATP-binding RNA helicase involved in mitochondrial RNA metabolism. Required for maintenance of mitochondrial DNA. The protein is ATP-dependent RNA helicase MRH4, mitochondrial (MRH4) of Phaeosphaeria nodorum (strain SN15 / ATCC MYA-4574 / FGSC 10173) (Glume blotch fungus).